Consider the following 63-residue polypeptide: Large ribosomal subunit protein uL29 (63 aa).

The protein belongs to the universal ribosomal protein uL29 family.

The protein is Large ribosomal subunit protein uL29 of Chromohalobacter salexigens (strain ATCC BAA-138 / DSM 3043 / CIP 106854 / NCIMB 13768 / 1H11).